The chain runs to 213 residues: Putative cytochrome c-type biogenesis protein HI_1454 (213 aa).

6 helical membrane-spanning segments follow: residues 15 to 35 (GLASFLSPCIFPIIPIYFGIL), 46 to 66 (FLFILGLSLTFVSLGFSFGFL), 77 to 97 (IIAGVIVIILGIHQLGIFKIG), 118 to 138 (AFVLGLTFSLGWTPCIGPILA), 154 to 174 (ASMMFVYVLGLATPFVLFSFF), and 192 to 212 (FKIGGGILIIVMGILLITNNF).

This sequence belongs to the DsbD family.

The protein localises to the cell membrane. Could be involved in cytochrome c synthesis. The chain is Putative cytochrome c-type biogenesis protein HI_1454 from Haemophilus influenzae (strain ATCC 51907 / DSM 11121 / KW20 / Rd).